The sequence spans 757 residues: Vitamin K-dependent gamma-carboxylase (757 aa).

The residue at position 2 (Ala2) is an N-acetylalanine. Over 2-60 (AVHRGSALVAPASDKVQKNKSAQTSGLKQGSRMEKILGFEWTDLSSWQSVVTLLNKPTD) the chain is Cytoplasmic. A helical membrane pass occupies residues 61 to 81 (PANLAVFRFLFAFLMLLDIPQ). The Lumenal segment spans residues 82–113 (ERGLSSLDRKYLDGLDVCRFPLLDALRPLPLD). A disulfide bridge connects residues Cys99 and Cys450. Residues 114–134 (WMYLVYTIMFLGALGMMLGLC) form a helical membrane-spanning segment. Residues 135–136 (YR) are Cytoplasmic-facing. The chain crosses the membrane as a helical span at residues 137 to 157 (LSCVLFLLPYWYVFLLDKTSW). Topologically, residues 158 to 292 (NNHSYLYGLL…VSYFHCMNSQ (135 aa)) are lumenal. The helical transmembrane segment at 293 to 313 (LFSIGMFPYVMLASSPLFCSA) threads the bilayer. At 314–361 (EWPRKLVARCPKRLQELLPTKAAPRPSASCVYKRSRGKAGPKPGLRHQ) the chain is on the cytoplasmic side. Residues 362–382 (LGAIFTLLYLLEQLFLPYSHF) form a helical membrane-spanning segment. The Lumenal segment spans residues 383-757 (LTQGYNNWTN…PDSEHVHSEF (375 aa)). Residues 729–757 (EPVDESSASNTDSSNHPSEPDSEHVHSEF) form a disordered region. The span at 734 to 745 (SSASNTDSSNHP) shows a compositional bias: polar residues. A compositionally biased stretch (basic and acidic residues) spans 746–757 (SEPDSEHVHSEF).

The protein belongs to the vitamin K-dependent gamma-carboxylase family. In terms of assembly, monomer. May interact with CALU.

The protein resides in the endoplasmic reticulum membrane. The catalysed reaction is 4-carboxy-L-glutamyl-[protein] + 2,3-epoxyphylloquinone + H2O + H(+) = phylloquinol + L-glutamyl-[protein] + CO2 + O2. Its function is as follows. Mediates the vitamin K-dependent carboxylation of glutamate residues to calcium-binding gamma-carboxyglutamate (Gla) residues with the concomitant conversion of the reduced hydroquinone form of vitamin K to vitamin K epoxide. Catalyzes gamma-carboxylation of various proteins, such as blood coagulation factors (F2, F7, F9 and F10), osteocalcin (bglap and bglap2) or matrix Gla protein (MGP). This chain is Vitamin K-dependent gamma-carboxylase (Ggcx), found in Mus musculus (Mouse).